Here is a 228-residue protein sequence, read N- to C-terminus: MVIFGLSRAIRKAKKNPIIAEIKVYSPKYGDLLRGRDPLRILRAYEEAGAVGISYITDQKYFKGSFDFLKVLCKETTLPVLRKDFITSKEEIEKTAEVGASAVLLITRILKDKLPEFVDYAKEHGLDTLVEVHTEDELKLAIKTNSTMIGINNRDIGKLEMDDGDVSLTEILAPKIPGKFVKVSESGIATLEDLKRALRVADAALIGTALMKAENPAELLKKFVEAEI.

Belongs to the TrpC family.

It carries out the reaction 1-(2-carboxyphenylamino)-1-deoxy-D-ribulose 5-phosphate + H(+) = (1S,2R)-1-C-(indol-3-yl)glycerol 3-phosphate + CO2 + H2O. Its pathway is amino-acid biosynthesis; L-tryptophan biosynthesis; L-tryptophan from chorismate: step 4/5. This Pyrococcus furiosus (strain ATCC 43587 / DSM 3638 / JCM 8422 / Vc1) protein is Indole-3-glycerol phosphate synthase.